We begin with the raw amino-acid sequence, 448 residues long: Tubulin beta chain (448 aa).

Glutamine 11, glutamate 69, serine 138, glycine 142, threonine 143, glycine 144, asparagine 204, and asparagine 226 together coordinate GTP. Glutamate 69 is a Mg(2+) binding site.

This sequence belongs to the tubulin family. Dimer of alpha and beta chains. A typical microtubule is a hollow water-filled tube with an outer diameter of 25 nm and an inner diameter of 15 nM. Alpha-beta heterodimers associate head-to-tail to form protofilaments running lengthwise along the microtubule wall with the beta-tubulin subunit facing the microtubule plus end conferring a structural polarity. Microtubules usually have 13 protofilaments but different protofilament numbers can be found in some organisms and specialized cells. The cofactor is Mg(2+).

The protein localises to the cytoplasm. Its subcellular location is the cytoskeleton. Tubulin is the major constituent of microtubules, a cylinder consisting of laterally associated linear protofilaments composed of alpha- and beta-tubulin heterodimers. Microtubules grow by the addition of GTP-tubulin dimers to the microtubule end, where a stabilizing cap forms. Below the cap, tubulin dimers are in GDP-bound state, owing to GTPase activity of alpha-tubulin. This chain is Tubulin beta chain (TUB1), found in Melampsora lini (Rust fungus).